The primary structure comprises 564 residues: Mercuric reductase (564 aa).

An HMA domain is found at 1-65 (MSTLKITGMT…AVAGLGYRAT (65 aa)). Positions 11 and 14 each coordinate a metal cation. The FAD site is built by Ala-109, Gly-129, and Thr-134. Cys-135 and Cys-140 form a disulfide bridge. Residues Lys-144, Ala-210, Asp-406, and Val-414 each coordinate FAD. Residues Cys-561 and Cys-562 each coordinate Hg(2+).

This sequence belongs to the class-I pyridine nucleotide-disulfide oxidoreductase family. In terms of assembly, homodimer. Requires FAD as cofactor.

It carries out the reaction Hg + NADP(+) + H(+) = Hg(2+) + NADPH. Its function is as follows. Resistance to Hg(2+) in bacteria appears to be governed by a specialized system which includes mercuric reductase. MerA protein is responsible for volatilizing mercury as Hg(0). The protein is Mercuric reductase (merA) of Shigella flexneri.